An 89-amino-acid polypeptide reads, in one-letter code: Large ribosomal subunit protein bL27 (89 aa).

Residues 1 to 26 (MAQKKAGGSSRNGRDSVGQRRGVKRF) form a disordered region.

Belongs to the bacterial ribosomal protein bL27 family.

This Desulfovibrio desulfuricans (strain ATCC 27774 / DSM 6949 / MB) protein is Large ribosomal subunit protein bL27.